The chain runs to 575 residues: MLCILILLLHPRLCPVTKGGLGKPSGDIYTALFGAPCDCKGGTQTNNYATPTYTQVTDCGDKNAYLTYDTNWNGVSSPKWLCVRKPPSIPVINGRPGPCPSECTNNIKSQMHSSCYSSFSQCTQGNNTYFTAILQRTKSTSETNPVTSGLQPHGVLQAGCDGTVGKSVCWNQQAPIHVSDGGGPQDAVRELYVQKQIELVIQSQFPKLSYHPLARSKPRGPDIDAQMLDILSATHQALNISNPSLAQNCWLCLNQGTSMPLAFPVNISSFNASQNNCTPSLPFRVQPMPSQVYPCFFKGAQNNSFDIPVGVANFVNCSSSSNHSEALCPGPGQAFVCGNNLAFTALPANWTGSCVLAALLPDIDIISGDDPVPIPTFDYIAGRQKRAVTLIPLLVGLGVSTAVATGTAGLGVAVQSYTKLSHQLINDVQALSSTINDLQDQLDSLAEVVLQNRRGLDLLTAEQGGICLALQERCCFYANKSGIVRDKIKNLQEDLEKRRKALADNLFLTGLNGLLPYLLPFLGPLFAIILFFSFAPWILRRVTALIRDQLNSLLGKPIQIHYHQLATRDLEYGRL.

A signal peptide spans 1 to 19 (MLCILILLLHPRLCPVTKG). Topologically, residues 20 to 517 (GLGKPSGDIY…LTGLNGLLPY (498 aa)) are extracellular. 2 N-linked (GlcNAc...) asparagine; by host glycosylation sites follow: N126 and N239. Positions 249-252 (CWLC) match the CXXC motif. 3 disulfides stabilise this stretch: C249/C252, C249/C475, and C467/C474. N-linked (GlcNAc...) asparagine; by host glycosylation is found at N266, N271, N302, N316, N322, and N349. A fusion peptide region spans residues 390-410 (LIPLLVGLGVSTAVATGTAGL). Coiled-coil stretches lie at residues 411–461 (GVAV…LLTA) and 471–507 (QERC…DNLF). An immunosuppression region spans residues 450–466 (LQNRRGLDLLTAEQGGI). Residues 467-475 (CLALQERCC) carry the CX6CC motif. N479 carries an N-linked (GlcNAc...) asparagine; by host glycan. The helical transmembrane segment at 518-538 (LLPFLGPLFAIILFFSFAPWI) threads the bilayer. The Cytoplasmic portion of the chain corresponds to 539–575 (LRRVTALIRDQLNSLLGKPIQIHYHQLATRDLEYGRL). The YXXL motif; contains endocytosis signal motif lies at 562–565 (YHQL).

The mature envelope protein (Env) consists of a trimer of SU-TM heterodimers attached by a labile interchain disulfide bond. Post-translationally, specific enzymatic cleavages in vivo yield mature proteins. Envelope glycoproteins are synthesized as an inactive precursor that is N-glycosylated and processed likely by host cell furin or by a furin-like protease in the Golgi to yield the mature SU and TM proteins. The cleavage site between SU and TM requires the minimal sequence [KR]-X-[KR]-R. In terms of processing, the CXXC motif is highly conserved across a broad range of retroviral envelope proteins. It is thought to participate in the formation of a labile disulfide bond possibly with the CX6CC motif present in the transmembrane protein. Isomerization of the intersubunit disulfide bond to an SU intrachain disulfide bond is thought to occur upon receptor recognition in order to allow membrane fusion.

Its subcellular location is the virion membrane. The protein localises to the host cell membrane. Functionally, the surface protein (SU) attaches the virus to the host cell by binding to its receptor. This interaction triggers the refolding of the transmembrane protein (TM) and is thought to activate its fusogenic potential by unmasking its fusion peptide. Fusion occurs at the host cell plasma membrane. In terms of biological role, the transmembrane protein (TM) acts as a class I viral fusion protein. Under the current model, the protein has at least 3 conformational states: pre-fusion native state, pre-hairpin intermediate state, and post-fusion hairpin state. During viral and target cell membrane fusion, the coiled coil regions (heptad repeats) assume a trimer-of-hairpins structure, positioning the fusion peptide in close proximity to the C-terminal region of the ectodomain. The formation of this structure appears to drive apposition and subsequent fusion of viral and target cell membranes. Membranes fusion leads to delivery of the nucleocapsid into the cytoplasm. This Squirrel monkey retrovirus (SMRV-H) protein is Envelope glycoprotein (env).